We begin with the raw amino-acid sequence, 313 residues long: Ribosomal RNA small subunit methyltransferase H (313 aa).

S-adenosyl-L-methionine contacts are provided by residues 35–37, Asp-55, Phe-80, Asp-102, and Gln-109; that span reads GGH.

The protein belongs to the methyltransferase superfamily. RsmH family.

Its subcellular location is the cytoplasm. The enzyme catalyses cytidine(1402) in 16S rRNA + S-adenosyl-L-methionine = N(4)-methylcytidine(1402) in 16S rRNA + S-adenosyl-L-homocysteine + H(+). Its function is as follows. Specifically methylates the N4 position of cytidine in position 1402 (C1402) of 16S rRNA. The protein is Ribosomal RNA small subunit methyltransferase H of Shewanella putrefaciens (strain CN-32 / ATCC BAA-453).